We begin with the raw amino-acid sequence, 623 residues long: Peptide transporter PTR2 (623 aa).

Disordered regions lie at residues methionine 1–aspartate 20 and aspartate 31–glutamate 58. Helical transmembrane passes span alanine 134–glycine 154, alanine 163–isoleucine 183, asparagine 191–methionine 211, isoleucine 250–tyrosine 270, phenylalanine 277–isoleucine 297, isoleucine 385–methionine 405, phenylalanine 418–leucine 438, isoleucine 448–leucine 468, leucine 499–tyrosine 519, leucine 529–threonine 549, and leucine 557–alanine 577.

Belongs to the major facilitator superfamily. Proton-dependent oligopeptide transporter (POT/PTR) (TC 2.A.17) family.

It localises to the membrane. Its function is as follows. Uptake of small peptides. The sequence is that of Peptide transporter PTR2 (PTR2) from Candida albicans (Yeast).